The sequence spans 248 residues: Small ribosomal subunit protein uS2 (248 aa).

It belongs to the universal ribosomal protein uS2 family.

The polypeptide is Small ribosomal subunit protein uS2 (Thiobacillus denitrificans (strain ATCC 25259 / T1)).